The following is a 119-amino-acid chain: Ribonuclease P protein component (119 aa).

Belongs to the RnpA family. Consists of a catalytic RNA component (M1 or rnpB) and a protein subunit.

It carries out the reaction Endonucleolytic cleavage of RNA, removing 5'-extranucleotides from tRNA precursor.. RNaseP catalyzes the removal of the 5'-leader sequence from pre-tRNA to produce the mature 5'-terminus. It can also cleave other RNA substrates such as 4.5S RNA. The protein component plays an auxiliary but essential role in vivo by binding to the 5'-leader sequence and broadening the substrate specificity of the ribozyme. This chain is Ribonuclease P protein component, found in Coprothermobacter proteolyticus (strain ATCC 35245 / DSM 5265 / OCM 4 / BT).